The chain runs to 373 residues: Secondary metabolism regulator laeA (373 aa).

2 disordered regions span residues 1–21 and 53–81; these read MFLN…PLNV and AAER…NPDR. Residues 67–77 show a composition bias toward polar residues; it reads GSPSINSTSSK.

This sequence belongs to the methyltransferase superfamily. LaeA methyltransferase family. As to quaternary structure, component of the heterotrimeric velvet complex composed of laeA, veA and velB; VeA acting as a bridging protein between laeA and velB.

The protein localises to the nucleus. It carries out the reaction L-methionyl-[protein] + S-adenosyl-L-methionine = S-methyl-L-methionyl-[protein] + S-adenosyl-L-homocysteine. Methyltransferase that performs automethylation. No other methyl-accepting substrate has been identified yet. Component of the velvet transcription factor complex that acts as a global regulator for secondary metabolite gene expression. Controls the expression of the cyclopiazonic acid (CPA) gene clusters. Regulates also pigmentation and conidial head morphology. The protein is Secondary metabolism regulator laeA of Aspergillus fumisynnematus.